Consider the following 429-residue polypeptide: Dual-specificity RNA methyltransferase RlmN (429 aa).

The segment at 1 to 23 (MRAMQTHTEIAPMPIPGHVDPVP) is disordered. Catalysis depends on Glu-128, which acts as the Proton acceptor. A Radical SAM core domain is found at 134–397 (DADRGTLCVS…APVRTPRGRD (264 aa)). An intrachain disulfide couples Cys-141 to Cys-402. 3 residues coordinate [4Fe-4S] cluster: Cys-148, Cys-152, and Cys-155. S-adenosyl-L-methionine-binding positions include 226-227 (GE), Ser-258, 280-282 (SLH), and Asn-359. The active-site S-methylcysteine intermediate is the Cys-402.

This sequence belongs to the radical SAM superfamily. RlmN family. It depends on [4Fe-4S] cluster as a cofactor.

It localises to the cytoplasm. It carries out the reaction adenosine(2503) in 23S rRNA + 2 reduced [2Fe-2S]-[ferredoxin] + 2 S-adenosyl-L-methionine = 2-methyladenosine(2503) in 23S rRNA + 5'-deoxyadenosine + L-methionine + 2 oxidized [2Fe-2S]-[ferredoxin] + S-adenosyl-L-homocysteine. It catalyses the reaction adenosine(37) in tRNA + 2 reduced [2Fe-2S]-[ferredoxin] + 2 S-adenosyl-L-methionine = 2-methyladenosine(37) in tRNA + 5'-deoxyadenosine + L-methionine + 2 oxidized [2Fe-2S]-[ferredoxin] + S-adenosyl-L-homocysteine. In terms of biological role, specifically methylates position 2 of adenine 2503 in 23S rRNA and position 2 of adenine 37 in tRNAs. m2A2503 modification seems to play a crucial role in the proofreading step occurring at the peptidyl transferase center and thus would serve to optimize ribosomal fidelity. This Novosphingobium aromaticivorans (strain ATCC 700278 / DSM 12444 / CCUG 56034 / CIP 105152 / NBRC 16084 / F199) protein is Dual-specificity RNA methyltransferase RlmN.